The primary structure comprises 1451 residues: MIVLTLCLFLFLYSSVSCTSNNDCVQVNVTQLPGNENIIKDFLFQNFKEEGSLVVGGYYPTEVWYNCSTTQQTTAYKYFSNIHAFYFDMEAMENSTGNARGKPLLVHVHGNPVSIIVYISAYRDDVQFRPLLKHGLLCITKNDTVDYNSFTINQWRDICLGDDRKIPFSVVPTDNGTKLFGLEWNDDYVTAYISDESHRLNINNNWFNNVTLLYSRTSTATWQHSAAYVYQGVSNFTYYKLNKTAGLKSYELCEDYEYCTGYATNVFAPTSGGYIPDGFSFNNWFMLTNSSTFVSGRFVTNQPLLVNCLWPVPSFGVAAQEFCFEGAQFSQCNGVSLNNTVDVIRFNLNFTTDVQSGMGATVFSLNTTGGVILEISCYNDTVSESSFYSYGEIPFGVTDGPRYCYVLYNGTALKYLGTLPPSVKEIAISKWGHFYINGYNFFSTFPIDCIAFNLTTGASGAFWTIAYTSYTEALVQVENTAIKKVTYCNSHINNIKCSQLTANLQNGFYPVASSEVGLVNKSVVLLPSFYSHTSVNITIDLGMKRSVTVTIASPLSNITLPMQDNNIDVYCIRSNQFSVYVHSTCKSSLWDNNFNSACTDVLDATAVIKTGTCPFSFDKLNNYLTFNKFCLSLNPVGANCKLDVAARTRTNEQVFGSLYVIYEEGDNIVGVPSDNSGLHDLSVLHLDSCTDYNIYGRTGVGIIRKTNSTLLSGLYYTSLSGDLLGFKNVSDGVVYSVTPCDVSAQAAVIDGAIVGAMTSINSELLGLTHWTTTPNFYYYSIYNYTNVMNRGTAIDNDIDCEPIITYSNIGVCKNGALVFINVTHSDGDVQPISTGNVTIPTNFTISVQVEYIQVYTTPVSIDCARYVCNGNPRCNKLLTQYVSACQTIEQALAMGARLENMEIDSMLFVSENALKLASVEAFNSTENLDPIYKEWPNIGGSWLGGLKDILPSHNSKRKYRSAIEDLLFDKVVTSGLGTVDEDYKRSAGGYDIADLVCARYYNGIMVLPGVANDDKMTMYTASLTGGITLGALSGGAVAIPFAVAVQARLNYVALQTDVLNKNQQILANAFNQAIGNITQAFGKVNDAIHQTSKGLATVAKALAKVQDVVNTQGQALSHLTVQLQNNFQAISSSISDIYNRLDELSADAQVDRLITGRLTALNAFVSQTLTRQAEVRASRQLAKDKVNECVRSQSQRFGFCGNGTHLFSLANAAPNGMIFFHTVLLPTAYETVTAWSGICASDGSRTFGLVVEDVQLTLFRNLDEKFYLTPRTMYQPRVATSSDFVQIEGCDVLFVNGTVIELPSIIPDYIDINQTVQDILENFRPNWTVPELPLDIFHATYLNLTGEINDLEFRSEKLHNTTVELAILIDNINNTLVNLEWLNRIETYVKWPWYVWLLIGLVVIFCIPILLFCCCSTGCCGCIGCLGSCCHSICSRGQFESYEPIEKVHVH.

An N-terminal signal peptide occupies residues 1–31 (MIVLTLCLFLFLYSSVSCTSNNDCVQVNVTQ). Residues 32–779 (LPGNENIIKD…WTTTPNFYYY (748 aa)) are S1. Topologically, residues 32–1392 (LPGNENIIKD…NRIETYVKWP (1361 aa)) are virion surface. The segment at 660–803 (VIYEEGDNIV…IDNDIDCEPI (144 aa)) is interaction with host ANPEP. Residues 780–1451 (SIYNYTNVMN…YEPIEKVHVH (672 aa)) form an S2 region. The tract at residues 1024–1045 (TGGITLGALSGGAVAIPFAVAV) is fusion peptide. The heptad repeat 1 (HR1) stretch occupies residues 1039-1158 (IPFAVAVQAR…QVDRLITGRL (120 aa)). Coiled-coil stretches lie at residues 1106 to 1150 (QDVV…DAQV) and 1340 to 1382 (TYLN…LEWL). Positions 1307–1404 (PDYIDINQTV…VWLLIGLVVI (98 aa)) are heptad repeat 2 (HR2). Residues 1393–1412 (WYVWLLIGLVVIFCIPILLF) traverse the membrane as a helical segment. The Intravirion segment spans residues 1413 to 1451 (CCCSTGCCGCIGCLGSCCHSICSRGQFESYEPIEKVHVH). The KxHxx signature appears at 1447 to 1451 (KVHVH).

The protein belongs to the alphacoronaviruses spike protein family. In terms of assembly, homotrimer. During virus morphogenesis, found in a complex with M and HE proteins. Interacts with host ANPEP.

It localises to the virion membrane. It is found in the host endoplasmic reticulum-Golgi intermediate compartment membrane. Its function is as follows. S1 region attaches the virion to the cell membrane by interacting with host ANPEP/aminopeptidase N, initiating the infection. Binding to the receptor probably induces conformational changes in the S glycoprotein unmasking the fusion peptide of S2 region and activating membranes fusion. S2 region belongs to the class I viral fusion protein. Under the current model, the protein has at least 3 conformational states: pre-fusion native state, pre-hairpin intermediate state, and post-fusion hairpin state. During viral and target cell membrane fusion, the coiled coil regions (heptad repeats) regions assume a trimer-of-hairpins structure, positioning the fusion peptide in close proximity to the C-terminal region of the ectodomain. The formation of this structure appears to drive apposition and subsequent fusion of viral and target cell membranes. This is Spike glycoprotein from Canine coronavirus (strain Insavc-1) (CCoV).